The primary structure comprises 283 residues: Pseudokinase OPG198 (283 aa).

Residues Met-1 and Lys-30 each contribute to the ATP site. In terms of domain architecture, Protein kinase spans 1–283 (MESFKYCFDN…DRLRRLFIQD (283 aa)).

The protein belongs to the protein kinase superfamily. Ser/Thr protein kinase family. Poxviruses subfamily. Interacts with B1/VPK1. Interacts with host VRK1. Interacts with host VRK2.

Its subcellular location is the host nucleus. With respect to regulation, both catalytically active kinases B1/VPK1 and host VRK2 repress B12 inhibitory activity in a B1/VPK1 deletion mutant strain. In terms of biological role, pseudokinase that plays a role in viral DNA replication repression by activating the antiviral protein BANF1 and inhibiting the activity of host VRK1, a cellular modulator of BANF1. The polypeptide is Pseudokinase OPG198 (OPG198) (Homo sapiens (Human)).